The sequence spans 268 residues: Small ribosomal subunit protein mS43 (268 aa).

The transit peptide at methionine 1 to serine 23 directs the protein to the mitochondrion.

This sequence belongs to the mitochondrion-specific ribosomal protein mS43 family. Component of the mitochondrial small ribosomal subunit (mt-SSU). Mature yeast 74S mitochondrial ribosomes consist of a small (37S) and a large (54S) subunit. The 37S small subunit contains a 15S ribosomal RNA (15S mt-rRNA) and at least 32 different proteins. The 54S large subunit contains a 21S rRNA (21S mt-rRNA) and at least 45 different proteins. mS43 forms a dimer with mS42, building a large protuberance adjacent to the mRNA channel exit in the mt-SSU body.

It localises to the mitochondrion. Its function is as follows. Component of the mitochondrial ribosome (mitoribosome), a dedicated translation machinery responsible for the synthesis of mitochondrial genome-encoded proteins, including at least some of the essential transmembrane subunits of the mitochondrial respiratory chain. The mitoribosomes are attached to the mitochondrial inner membrane and translation products are cotranslationally integrated into the membrane. In Schizosaccharomyces pombe (strain 972 / ATCC 24843) (Fission yeast), this protein is Small ribosomal subunit protein mS43.